Here is a 278-residue protein sequence, read N- to C-terminus: 2-dehydro-3-deoxyphosphooctonate aldolase (278 aa).

Belongs to the KdsA family.

Its subcellular location is the cytoplasm. It catalyses the reaction D-arabinose 5-phosphate + phosphoenolpyruvate + H2O = 3-deoxy-alpha-D-manno-2-octulosonate-8-phosphate + phosphate. The protein operates within carbohydrate biosynthesis; 3-deoxy-D-manno-octulosonate biosynthesis; 3-deoxy-D-manno-octulosonate from D-ribulose 5-phosphate: step 2/3. It participates in bacterial outer membrane biogenesis; lipopolysaccharide biosynthesis. The chain is 2-dehydro-3-deoxyphosphooctonate aldolase from Bartonella tribocorum (strain CIP 105476 / IBS 506).